Reading from the N-terminus, the 1202-residue chain is Phospholipid-transporting ATPase 10 (1202 aa).

Residues 1–73 (MAGPSRRRRR…STKYTVASFF (73 aa)) lie on the Cytoplasmic side of the membrane. A helical membrane pass occupies residues 74–95 (PKSLFEQFRRVANFYFLVTGIL). Residues 96–99 (SLTD) are Extracellular-facing. The helical transmembrane segment at 100-122 (LSPYGAVSALLPLALVISATMVK) threads the bilayer. Topologically, residues 123 to 305 (EGIEDWRRKQ…SRIERTMDKI (183 aa)) are cytoplasmic. Residues 306-327 (IYLMFGLVFLMSFVGSIIFGVE) form a helical membrane-spanning segment. Topologically, residues 328–364 (TREDKVKNGRTERWYLKPDDADIFFDPERAPMAAIYH) are extracellular. A helical membrane pass occupies residues 365 to 382 (FFTATMLYSYFIPISLYV). The Cytoplasmic portion of the chain corresponds to 383–920 (SIEIVKVLQS…HGHWCYSRIA (538 aa)). The 4-aspartylphosphate intermediate role is filled by Asp430. Positions 865 and 869 each coordinate Mg(2+). Residues 921–940 (SMICYFFYKNITFGVTVFLY) form a helical membrane-spanning segment. Residues 941-954 (EAYTSFSGQPAYND) are Extracellular-facing. A helical transmembrane segment spans residues 955 to 974 (WFLSLFNVFFSSLPVIALGV). The Cytoplasmic portion of the chain corresponds to 975–1004 (FDQDVSARFCYKFPLLYQEGVQNILFSWKR). Residues 1005-1027 (IIGWMFNGFISALAIFFLCKESL) traverse the membrane as a helical segment. Residues 1028–1040 (KHQLFDPDGKTAG) lie on the Extracellular side of the membrane. Residues 1041–1063 (REILGGTMYTCVVWVVNLQMALS) traverse the membrane as a helical segment. Topologically, residues 1064-1069 (ISYFTW) are cytoplasmic. The chain crosses the membrane as a helical span at residues 1070–1090 (VQHIVIWGSIAFWYIFLMIYG). Residues 1091–1107 (AMTPSFSTDAYMVFLEA) are Extracellular-facing. Residues 1108 to 1132 (LAPAPSYWLTTLFVMIFALIPYFVY) traverse the membrane as a helical segment. At 1133–1202 (KSVQMRFFPK…DQIYKDLVGV (70 aa)) the chain is on the cytoplasmic side.

Belongs to the cation transport ATPase (P-type) (TC 3.A.3) family. Type IV subfamily.

The protein localises to the cell membrane. It catalyses the reaction ATP + H2O + phospholipidSide 1 = ADP + phosphate + phospholipidSide 2.. In terms of biological role, involved in transport of phospholipids. This is Phospholipid-transporting ATPase 10 from Arabidopsis thaliana (Mouse-ear cress).